We begin with the raw amino-acid sequence, 525 residues long: Vesicular inhibitory amino acid transporter (525 aa).

Residues M1–M132 lie on the Cytoplasmic side of the membrane. The segment at I83–E107 is disordered. Residues F133–I153 form a helical membrane-spanning segment. At F154–R204 the chain is on the lumenal, vesicle side. Y186 is modified (3'-nitrotyrosine). A helical membrane pass occupies residues V205–S225. The Cytoplasmic segment spans residues G226–K265. Residues F266 to L286 traverse the membrane as a helical segment. Residues S287–K305 lie on the Lumenal, vesicle side of the membrane. Residues F306–L326 traverse the membrane as a helical segment. Residues E327–N341 lie on the Cytoplasmic side of the membrane. Residues W342 to W362 form a helical membrane-spanning segment. The Lumenal, vesicle segment spans residues A363–N383. Residues I384 to V404 traverse the membrane as a helical segment. Residues L405 to A438 are Cytoplasmic-facing. The chain crosses the membrane as a helical span at residues L439–L459. The Lumenal, vesicle portion of the chain corresponds to T460 to G461. Residues S462–W482 form a helical membrane-spanning segment. Topologically, residues R483–Q489 are cytoplasmic. Residues V490 to H510 traverse the membrane as a helical segment. The Lumenal, vesicle segment spans residues S511–D525.

It belongs to the amino acid/polyamine transporter 2 family. As to expression, retina. Expressed throughout the horizontal cells or more specifically at the terminals.

The protein resides in the cytoplasmic vesicle membrane. The protein localises to the presynapse. The enzyme catalyses 4-aminobutanoate(out) + n H(+)(in) = 4-aminobutanoate(in) + n H(+)(out). It catalyses the reaction glycine(out) + n H(+)(in) = glycine(in) + n H(+)(out). It carries out the reaction beta-alanine(out) + n H(+)(in) = beta-alanine(in) + n H(+)(out). Its function is as follows. Antiporter that exchanges vesicular protons for cytosolic 4-aminobutanoate or to a lesser extend glycine, thus allowing their secretion from nerve terminals. The transport is equally dependent on the chemical and electrical components of the proton gradient. May also transport beta-alanine. Acidification of GABAergic synaptic vesicles is a prerequisite for 4-aminobutanoate uptake. The protein is Vesicular inhibitory amino acid transporter of Homo sapiens (Human).